We begin with the raw amino-acid sequence, 55 residues long: Large ribosomal subunit protein bL33 (55 aa).

The protein belongs to the bacterial ribosomal protein bL33 family.

The chain is Large ribosomal subunit protein bL33 from Maricaulis maris (strain MCS10) (Caulobacter maris).